Reading from the N-terminus, the 256-residue chain is MAAAAAGDSDSWDADTFSVEDPVRKVGGGGTAGGDRWEGEDEDEDVKDNWDDDDDEKKEEAEVKPEVKISEKKKIAEKIKEKERQQKKRQEEIKKRLEEPEEPKVLTPEEQLADKLRLKKLQEESDLELAKETFGVNNTVYGIDAMNPSSRDDFTEFGKLLKDKITQYEKSLYYANFLEALVRDVCISLEIDDLKKITNSLTVLCSEKQKQEKQSKAKKKKKGVVPGGGLKATMKDDLADYGGYDGGYAQDYEDFM.

Positions 1-67 are sufficient for interaction with EIF3B; sequence MAAAAAGDSD…KEEAEVKPEV (67 aa). A disordered region spans residues 1–106; sequence MAAAAAGDSD…LEEPEEPKVL (106 aa). A phosphoserine mark is found at Ser-9, Ser-11, and Ser-18. The segment covering 38-57 has biased composition (acidic residues); sequence EGEDEDEDVKDNWDDDDDEK. The span at 58 to 104 shows a compositional bias: basic and acidic residues; sequence KEEAEVKPEVKISEKKKIAEKIKEKERQQKKRQEEIKKRLEEPEEPK. A coiled-coil region spans residues 68-133; the sequence is KISEKKKIAE…ESDLELAKET (66 aa). Lys-104 participates in a covalent cross-link: Glycyl lysine isopeptide (Lys-Gly) (interchain with G-Cter in SUMO2). Thr-107 is modified (phosphothreonine). Ser-125 carries the phosphoserine modification. Residues 214 to 243 are disordered; that stretch reads QSKAKKKKKGVVPGGGLKATMKDDLADYGG. Residues 241–256 are promotes stable association with the 40S ribosome; sequence YGGYDGGYAQDYEDFM. Tyr-252 carries the phosphotyrosine modification.

This sequence belongs to the eIF-3 subunit J family. In terms of assembly, component of the eukaryotic translation initiation factor 3 (eIF-3) complex, which is composed of 13 subunits: EIF3A, EIF3B, EIF3C, EIF3D, EIF3E, EIF3F, EIF3G, EIF3H, EIF3I, EIF3J, EIF3K, EIF3L and EIF3M. The eIF-3 complex appears to include 3 stable modules: module A is composed of EIF3A, EIF3B, EIF3G and EIF3I; module B is composed of EIF3F, EIF3H, and EIF3M; and module C is composed of EIF3C, EIF3D, EIF3E, EIF3K and EIF3L. EIF3C of module C binds EIF3B of module A and EIF3H of module B, thereby linking the three modules. EIF3J is a labile subunit that binds to the eIF-3 complex via EIF3B. The eIF-3 complex interacts with RPS6KB1 under conditions of nutrient depletion. Mitogenic stimulation leads to binding and activation of a complex composed of MTOR and RPTOR, leading to phosphorylation and release of RPS6KB1 and binding of EIF4B to eIF-3. In terms of processing, phosphorylated. Phosphorylation is enhanced upon serum stimulation.

Its subcellular location is the cytoplasm. Its function is as follows. Component of the eukaryotic translation initiation factor 3 (eIF-3) complex, which is required for several steps in the initiation of protein synthesis. The eIF-3 complex associates with the 40S ribosome and facilitates the recruitment of eIF-1, eIF-1A, eIF-2:GTP:methionyl-tRNAi and eIF-5 to form the 43S pre-initiation complex (43S PIC). The eIF-3 complex stimulates mRNA recruitment to the 43S PIC and scanning of the mRNA for AUG recognition. The eIF-3 complex is also required for disassembly and recycling of post-termination ribosomal complexes and subsequently prevents premature joining of the 40S and 60S ribosomal subunits prior to initiation. The eIF-3 complex specifically targets and initiates translation of a subset of mRNAs involved in cell proliferation, including cell cycling, differentiation and apoptosis, and uses different modes of RNA stem-loop binding to exert either translational activation or repression. This subunit binds directly within the mRNA entry channel of the 40S ribosome to the aminoacyl (A) site. It may regulate the interaction between the 43S PIC and mRNA. The sequence is that of Eukaryotic translation initiation factor 3 subunit J from Bos taurus (Bovine).